Reading from the N-terminus, the 131-residue chain is D-ribose pyranase (131 aa).

Catalysis depends on histidine 20, which acts as the Proton donor. Substrate-binding positions include aspartate 28, histidine 98, and 120–122 (FSN).

Belongs to the RbsD / FucU family. RbsD subfamily. Homodecamer.

It localises to the cytoplasm. The enzyme catalyses beta-D-ribopyranose = beta-D-ribofuranose. Its pathway is carbohydrate metabolism; D-ribose degradation; D-ribose 5-phosphate from beta-D-ribopyranose: step 1/2. Its function is as follows. Catalyzes the interconversion of beta-pyran and beta-furan forms of D-ribose. The protein is D-ribose pyranase of Lactobacillus acidophilus (strain ATCC 700396 / NCK56 / N2 / NCFM).